Consider the following 183-residue polypeptide: MDSSDKSNLPLLLEIDWERHEAYTGENIFHVIAKKGWLKMLCALEGLVDEKIKPWLRKWSRDGNTCLHEAALRNKGPQAIRIMEKLIEYGADLNLKSSCHKPVLHVAVERNDYELVAWICQQPGINLEAEDFYKFTAHQLASKKNLNNDKKMVKILETYGAIPRQDGSSEDEVSDSEEKSDSE.

2 ANK repeats span residues 62–95 (DGNT…DLNL) and 99–129 (CHKP…NLEA). Residues 163–183 (PRQDGSSEDEVSDSEEKSDSE) form a disordered region.

Belongs to the polydnaviridae I-Kappa-B like protein family.

Its function is as follows. Suppresses the host immune response through NF-kappa-B inactivation. Possesses ankyrin repeat domains required for NF-kappa-B binding but lacks the regulatory regions required for dissociation from NF-kappa-B and degradation. Therefore, prevents host NF-kappa-B release and subsequent activation. The sequence is that of I-kappa-B like protein N2 (N5) from Microplitis demolitor (Parasitoid wasp).